The sequence spans 306 residues: Non-specific ribonucleoside hydrolase RihC (306 aa).

The active site involves histidine 235.

This sequence belongs to the IUNH family. RihC subfamily.

Its function is as follows. Hydrolyzes both purine and pyrimidine ribonucleosides with a broad-substrate specificity. This chain is Non-specific ribonucleoside hydrolase RihC, found in Salmonella dublin (strain CT_02021853).